We begin with the raw amino-acid sequence, 213 residues long: THAP domain-containing protein 1 (213 aa).

The THAP-type zinc-finger motif lies at 1 to 81 (MVQSCSAYGC…LKENAVPTIF (81 aa)). The HCFC1-binding motif (HBM) signature appears at 134–137 (DHNY). Residues 139–185 (VEDTMHQRKRIHQLEQQVEKLRKKLKTAQQRCRRQERQLEKLKEVVH) form an involved in homodimer formation region. The stretch at 139–190 (VEDTMHQRKRIHQLEQQVEKLRKKLKTAQQRCRRQERQLEKLKEVVHFQKEK) forms a coiled coil.

The protein belongs to the THAP1 family. As to quaternary structure, homodimer. Interacts with PAWR. Component of a THAP1/THAP3-HCFC1-OGT complex that contains, either THAP1 or THAP3, HCFC1 and OGT. Interacts with OGT. Interacts (via the HBM) with HCFC1 (via the Kelch-repeat domain); the interaction recruits HCFC1 to the RRM1 promoter. Highly expressed in heart, skeletal muscle, kidney and liver. Weaker expression in brain and placenta.

It localises to the nucleus. The protein localises to the nucleoplasm. Its subcellular location is the PML body. DNA-binding transcription regulator that regulates endothelial cell proliferation and G1/S cell-cycle progression. Specifically binds the 5'-[AT]NTNN[GT]GGCA[AGT]-3' core DNA sequence and acts by modulating expression of pRB-E2F cell-cycle target genes, including RRM1. Component of a THAP1/THAP3-HCFC1-OGT complex that is required for the regulation of the transcriptional activity of RRM1. May also have pro-apoptotic activity by potentiating both serum-withdrawal and TNF-induced apoptosis. This Homo sapiens (Human) protein is THAP domain-containing protein 1 (THAP1).